Consider the following 542-residue polypeptide: Putative cysteine ligase BshC (542 aa).

Residues 458–479 adopt a coiled-coil conformation; that stretch reads LTKNATLLQAQIDFLHQTLQRA.

This sequence belongs to the BshC family.

Involved in bacillithiol (BSH) biosynthesis. May catalyze the last step of the pathway, the addition of cysteine to glucosamine malate (GlcN-Mal) to generate BSH. This Geobacillus sp. (strain WCH70) protein is Putative cysteine ligase BshC.